Consider the following 338-residue polypeptide: Solute carrier family 35 member G5 (338 aa).

Positions 1–27 (MAGSHPYFNLPDSTHPSPPSAPPSLRW) are disordered. 9 consecutive transmembrane segments (helical) span residues 37 to 57 (TNGL…VGPL), 67 to 87 (LPSL…ALLL), 102 to 122 (GWAC…YSAV), 160 to 180 (CGLL…LWTL), 190 to 210 (TLGY…LLVY), 221 to 241 (TVAF…LFVL), 250 to 270 (LLSW…FTCV), 281 to 301 (LVCA…YYML), and 305 to 325 (VALS…IITA). Residues 49 to 174 (LPAGFVGPLS…SILGLIIILG (126 aa)) form the EamA 1 domain. The 54-residue stretch at 272–325 (YAVTKAHPALVCAVLHSEVVVALILQYYMLHETVALSDIMGAGVVLGSIAIITA) folds into the EamA 2 domain.

This sequence belongs to the SLC35G solute transporter family. Expressed in placenta and testis.

It localises to the membrane. This is Solute carrier family 35 member G5 (SLC35G5) from Homo sapiens (Human).